Consider the following 450-residue polypeptide: MSEMTPREIVDELNRHIIGQDKAKRAVAVALRNRWRRMQLDDELRQEVTPKNILMIGPTGVGKTEIARRLAKLARAPFIKVEATKFTEVGYVGKEIESIIKDLTDVAVKQTREEMMQKVRYRAEEAAEERILDVLLPPAKTSSSGWAQQQEETPENDDQRGTRQVFRKKLREGQLDDKEIEIDLAMPQMGVEIMAPPGMEEMTSQLQNMFQNMGSDKTKARKMRIKDAYKQLVDEEAAKLLNPDDVKEAAIESVEQNGIVFLDEIDKICKRGDTSGPDVSREGVQRDLLPLVEGTTVNTKHGMIKTDHILFIASGAFQMSKPSDLIPELQGRLPIRVELEALTSGDFVRILTEPSASLTTQYHALLNTEGVEVSFTEEGIQRIAEVAFHVNETTENIGARRLHTVLERLMEEISFHATDHSGEKLVIDADYVNEHVGELSQDEDLSRFIL.

ATP is bound by residues isoleucine 18 and 60 to 65 (GVGKTE). A compositionally biased stretch (polar residues) spans 140-151 (KTSSSGWAQQQE). Residues 140 to 162 (KTSSSGWAQQQEETPENDDQRGT) form a disordered region. 3 residues coordinate ATP: aspartate 263, glutamate 328, and arginine 400.

This sequence belongs to the ClpX chaperone family. HslU subfamily. In terms of assembly, a double ring-shaped homohexamer of HslV is capped on each side by a ring-shaped HslU homohexamer. The assembly of the HslU/HslV complex is dependent on binding of ATP.

The protein resides in the cytoplasm. Functionally, ATPase subunit of a proteasome-like degradation complex; this subunit has chaperone activity. The binding of ATP and its subsequent hydrolysis by HslU are essential for unfolding of protein substrates subsequently hydrolyzed by HslV. HslU recognizes the N-terminal part of its protein substrates and unfolds these before they are guided to HslV for hydrolysis. In Idiomarina loihiensis (strain ATCC BAA-735 / DSM 15497 / L2-TR), this protein is ATP-dependent protease ATPase subunit HslU.